The chain runs to 407 residues: Argininosuccinate synthase (407 aa).

Position 10 to 18 (10 to 18 (AYSGGLDTS)) interacts with ATP. L-citrulline is bound by residues Tyr-88 and Ser-93. Gly-118 is an ATP binding site. Residues Thr-120, Asn-124, and Asp-125 each contribute to the L-aspartate site. Asn-124 is a binding site for L-citrulline. L-citrulline is bound by residues Arg-128, Ser-177, Ser-186, Glu-263, and Tyr-275.

Belongs to the argininosuccinate synthase family. Type 1 subfamily. In terms of assembly, homotetramer.

Its subcellular location is the cytoplasm. It carries out the reaction L-citrulline + L-aspartate + ATP = 2-(N(omega)-L-arginino)succinate + AMP + diphosphate + H(+). The protein operates within amino-acid biosynthesis; L-arginine biosynthesis; L-arginine from L-ornithine and carbamoyl phosphate: step 2/3. In Clostridium botulinum (strain Eklund 17B / Type B), this protein is Argininosuccinate synthase.